Reading from the N-terminus, the 465-residue chain is MITGKIVQIIGAVVDVEFSQQSVPKIFNALKVDNQGSILILEVQQQLGSGIVRTIAMGSSNGLKRGLLVVDLEHGIKVPVGTATLGRIVNVLGQPIDMKGPLKNHDNSDIEYWEIHRKAPSYSEQLTSYEVLETGIKVIDLICPFSKGGKVGLFGGAGVGKTVNMMELIRNIATEHSGYSVFTGVGERTREGNDFYHEMSDSRVLDKVSLVYGQMNEPPGNRLRVAFTGLTIAEKFRNEGHDVLLFIDNIYRYTLAGTEVSALLGRIPSAVGYQPTLSEEMGVLQERITSTNKGSITSIQAVYVPADDLTDPSPATTFSHLDSTITLSRQIVSLGIYPAIDPLNSTSRQLDPRIVGQLHYDVALGVRSILQRYQELKDIIAILGMDELSEDDKILVSRARKIQKFLSQPFFVAEIFTGFSGKYVKLQDTINGFKDIIEGKVDHVPEQAFYMVGSINEVIEKSKKL.

ATP is bound at residue 155–162 (GGAGVGKT).

Belongs to the ATPase alpha/beta chains family. As to quaternary structure, F-type ATPases have 2 components, CF(1) - the catalytic core - and CF(0) - the membrane proton channel. CF(1) has five subunits: alpha(3), beta(3), gamma(1), delta(1), epsilon(1). CF(0) has three main subunits: a(1), b(2) and c(9-12). The alpha and beta chains form an alternating ring which encloses part of the gamma chain. CF(1) is attached to CF(0) by a central stalk formed by the gamma and epsilon chains, while a peripheral stalk is formed by the delta and b chains.

It is found in the cell membrane. It catalyses the reaction ATP + H2O + 4 H(+)(in) = ADP + phosphate + 5 H(+)(out). Produces ATP from ADP in the presence of a proton gradient across the membrane. The catalytic sites are hosted primarily by the beta subunits. This Buchnera aphidicola subsp. Baizongia pistaciae (strain Bp) protein is ATP synthase subunit beta.